Consider the following 299-residue polypeptide: Phosphoribosylaminoimidazole-succinocarboxamide synthase (299 aa).

This sequence belongs to the SAICAR synthetase family.

It catalyses the reaction 5-amino-1-(5-phospho-D-ribosyl)imidazole-4-carboxylate + L-aspartate + ATP = (2S)-2-[5-amino-1-(5-phospho-beta-D-ribosyl)imidazole-4-carboxamido]succinate + ADP + phosphate + 2 H(+). Its pathway is purine metabolism; IMP biosynthesis via de novo pathway; 5-amino-1-(5-phospho-D-ribosyl)imidazole-4-carboxamide from 5-amino-1-(5-phospho-D-ribosyl)imidazole-4-carboxylate: step 1/2. The sequence is that of Phosphoribosylaminoimidazole-succinocarboxamide synthase from Maridesulfovibrio salexigens (strain ATCC 14822 / DSM 2638 / NCIMB 8403 / VKM B-1763) (Desulfovibrio salexigens).